The sequence spans 301 residues: Uricase (301 aa).

Residues K11 and T58 each act as charge relay system in the active site. The urate site is built by T58, D59, F160, R177, V228, Q229, and N255. The Charge relay system role is filled by H257. Residues 299–301 (AKL) carry the Microbody targeting signal motif.

It belongs to the uricase family.

It localises to the peroxisome. It catalyses the reaction urate + O2 + H2O = 5-hydroxyisourate + H2O2. The protein operates within purine metabolism; urate degradation; (S)-allantoin from urate: step 1/3. Functionally, catalyzes the oxidation of uric acid to 5-hydroxyisourate, which is further processed to form (S)-allantoin. The sequence is that of Uricase (uaZ) from Emericella nidulans (strain FGSC A4 / ATCC 38163 / CBS 112.46 / NRRL 194 / M139) (Aspergillus nidulans).